A 199-amino-acid chain; its full sequence is Golgi to ER traffic protein 1 (199 aa).

At 1 to 11 (MLLPDLHPYTI) the chain is on the lumenal side. A helical membrane pass occupies residues 12 to 31 (LLSIFLVLVAKQLVATIGKS). At 32–115 (TIQEFVWLVY…SIDKASNALI (84 aa)) the chain is on the cytoplasmic side. Residues 76–116 (YAKWTKLNRQADKLSAELQKLNQEIQQQKSSIDKASNALIL) are a coiled coil. A helical membrane pass occupies residues 116–136 (LVLTTLPIWIARVFYRKTHLF). Topologically, residues 137-160 (YIRQGIFPKYVEWVLALPFLPNGA) are lumenal. Residues 161–177 (VGLTIWMFAVNSVVSNF) form a helical membrane-spanning segment. At 178-199 (SFLVSFPFAKRVSKPVRDTKVE) the chain is on the cytoplasmic side.

The protein belongs to the WRB/GET1 family. In terms of assembly, component of the Golgi to ER traffic (GET) complex, which is composed of GET1, GET2 and GET3. Within the complex, GET1 and GET2 form a heterotetramer which is stabilized by phosphatidylinositol binding and which binds to the GET3 homodimer.

It is found in the endoplasmic reticulum membrane. Its subcellular location is the golgi apparatus membrane. Its function is as follows. Required for the post-translational delivery of tail-anchored (TA) proteins to the endoplasmic reticulum. Together with GET2, acts as a membrane receptor for soluble GET3, which recognizes and selectively binds the transmembrane domain of TA proteins in the cytosol. The GET complex cooperates with the HDEL receptor ERD2 to mediate the ATP-dependent retrieval of resident ER proteins that contain a C-terminal H-D-E-L retention signal from the Golgi to the ER. This chain is Golgi to ER traffic protein 1, found in Candida albicans (strain SC5314 / ATCC MYA-2876) (Yeast).